The following is a 698-amino-acid chain: Polyribonucleotide nucleotidyltransferase (698 aa).

2 residues coordinate Mg(2+): D490 and D496. A KH domain is found at P558 to I617. Residues N627–K695 form the S1 motif domain.

Belongs to the polyribonucleotide nucleotidyltransferase family. Requires Mg(2+) as cofactor.

The protein localises to the cytoplasm. The catalysed reaction is RNA(n+1) + phosphate = RNA(n) + a ribonucleoside 5'-diphosphate. Its function is as follows. Involved in mRNA degradation. Catalyzes the phosphorolysis of single-stranded polyribonucleotides processively in the 3'- to 5'-direction. The polypeptide is Polyribonucleotide nucleotidyltransferase (Elusimicrobium minutum (strain Pei191)).